We begin with the raw amino-acid sequence, 268 residues long: Putative hydro-lyase Arad_8587 (268 aa).

It belongs to the D-glutamate cyclase family.

This chain is Putative hydro-lyase Arad_8587, found in Rhizobium rhizogenes (strain K84 / ATCC BAA-868) (Agrobacterium radiobacter).